The primary structure comprises 273 residues: WAP four-disulfide core domain protein 8 (273 aa).

A helical membrane pass occupies residues 45–65; it reads LAHSWWSGALLLLLLFLFLSL. Residues 76 to 123 form the WAP 1 domain; it reads IKQKVGECPRQRLECRNESLSSCKTDFNCKAHFKCCQFACGRKCMDPY. Intrachain disulfides connect cysteine 83–cysteine 111, cysteine 90–cysteine 115, cysteine 98–cysteine 110, cysteine 104–cysteine 119, cysteine 127–cysteine 177, cysteine 136–cysteine 160, cysteine 152–cysteine 173, cysteine 186–cysteine 214, cysteine 197–cysteine 218, cysteine 201–cysteine 213, cysteine 207–cysteine 222, cysteine 233–cysteine 261, cysteine 240–cysteine 264, cysteine 248–cysteine 260, and cysteine 254–cysteine 268. The BPTI/Kunitz inhibitor domain maps to 127–177; it reads CMLPSDKGNCQDILTRWYFDSQKHQCRAFLYSGCRGNANNFLTKTDCRNAC. WAP domains lie at 179 to 226 and 228 to 272; these read FVEK…ARVW and VKTG…LKPR.

Its subcellular location is the membrane. This chain is WAP four-disulfide core domain protein 8 (Wfdc8), found in Mus musculus (Mouse).